A 122-amino-acid polypeptide reads, in one-letter code: Large ribosomal subunit protein uL14c (122 aa).

Belongs to the universal ribosomal protein uL14 family. As to quaternary structure, part of the 50S ribosomal subunit.

It localises to the plastid. The protein resides in the chloroplast. Binds to 23S rRNA. This chain is Large ribosomal subunit protein uL14c, found in Cryptomeria japonica (Japanese cedar).